A 475-amino-acid polypeptide reads, in one-letter code: Lactate utilization protein B (475 aa).

4Fe-4S ferredoxin-type domains follow at residues Gly304–Tyr334 and Tyr353–Leu382. 7 residues coordinate [4Fe-4S] cluster: Cys313, Cys316, Cys319, Cys323, Cys366, Cys369, and Cys373.

This sequence belongs to the LutB/YkgF family.

In terms of biological role, is involved in L-lactate degradation and allows cells to grow with lactate as the sole carbon source. Has probably a role as an electron transporter during oxidation of L-lactate. In Shouchella clausii (strain KSM-K16) (Alkalihalobacillus clausii), this protein is Lactate utilization protein B.